We begin with the raw amino-acid sequence, 548 residues long: MFS-rype transporter paaT (548 aa).

Over residues 1 to 10 (MEAPRSDQAH) the composition is skewed to basic and acidic residues. Residues 1 to 32 (MEAPRSDQAHTDATTPMEAIRTTSLGTNNYGP) are disordered. Residues 21–30 (RTTSLGTNNY) are compositionally biased toward polar residues. Residues N70 and N93 are each glycosylated (N-linked (GlcNAc...) asparagine). 12 helical membrane-spanning segments follow: residues 100–120 (WYCTMVVAFTCFVVAFCSSVI), 139–159 (LVVITVFVIGFGLGPMVFAPM), 174–194 (ALAVIFVIPCAVSKNIGTLIV), 197–217 (LIDGIAFSAPMTLVGGTLADL), 224–244 (GVPMAAFSAAPFIGPAIGPLV), 256–276 (WLYWIQLILAFVAWVMITFTV), 332–352 (IVLFISLYMSVIYGLLYMFFV), 370–390 (GLMFIPLAIGVIFSACCAPFV), 411–431 (LIPMMWACWCIPSGLFVFAWT), 436–456 (LHWMGPAMGGFLIGVGVILLY), 471–493 (AASALAAKTFIRSIWGACTVLFT), and 505–525 (ASTLLAFIGLACCAIPYVFYF). The short motif at 258-269 (YWIQLILAFVAW) is the Peroxisomal targeting signal element.

This sequence belongs to the major facilitator superfamily. DHA1 family. Polyamines/proton antiporter (TC 2.A.1.2.16) subfamily.

It is found in the peroxisome membrane. Functionally, MFS-type transporter involved in penicillin production, most likely through the translocation of side-chain precursors (phenylacetic acid and phenoxyacetic acid) from the cytosol to the peroxisomal lumen across the peroxisomal membrane. This chain is MFS-rype transporter paaT, found in Penicillium rubens (strain ATCC 28089 / DSM 1075 / NRRL 1951 / Wisconsin 54-1255) (Penicillium chrysogenum).